Here is a 147-residue protein sequence, read N- to C-terminus: Small ribosomal subunit protein uS12 (147 aa).

It belongs to the universal ribosomal protein uS12 family. In terms of assembly, part of the 30S ribosomal subunit.

Functionally, with S4 and S5 plays an important role in translational accuracy. Located at the interface of the 30S and 50S subunits. The polypeptide is Small ribosomal subunit protein uS12 (Pyrobaculum islandicum (strain DSM 4184 / JCM 9189 / GEO3)).